Consider the following 201-residue polypeptide: Outer-membrane lipoprotein carrier protein (201 aa).

The first 21 residues, 1–21, serve as a signal peptide directing secretion; that stretch reads MKKVLLTVCAIALFGSQAAWA.

It belongs to the LolA family. As to quaternary structure, monomer.

It localises to the periplasm. Participates in the translocation of lipoproteins from the inner membrane to the outer membrane. Only forms a complex with a lipoprotein if the residue after the N-terminal Cys is not an aspartate (The Asp acts as a targeting signal to indicate that the lipoprotein should stay in the inner membrane). The polypeptide is Outer-membrane lipoprotein carrier protein (Proteus mirabilis (strain HI4320)).